Consider the following 1503-residue polypeptide: EF-hand calcium-binding domain-containing protein 5 (1503 aa).

The disordered stretch occupies residues 1–23 (MNESASQEELRPAQENRKEDKER). The segment covering 8 to 23 (EELRPAQENRKEDKER) has biased composition (basic and acidic residues). The residue at position 77 (serine 77) is a Phosphoserine. Disordered regions lie at residues 477 to 518 (ASKT…EQGP), 544 to 656 (IEPG…QGPY), and 730 to 750 (FPET…KSQK). Residues 549–561 (HTESTLEQGSSRR) are compositionally biased toward polar residues. Basic and acidic residues-rich tracts occupy residues 562–582 (LLTE…HKGS) and 607–622 (GSRR…HKGS). The EF-hand domain occupies 869 to 904 (RQRLLLEAIFQKWDSDGSGFLDLKEVDELLYTYKEG). Residues aspartate 882, aspartate 884, serine 886, and glutamate 893 each contribute to the Ca(2+) site.

In Homo sapiens (Human), this protein is EF-hand calcium-binding domain-containing protein 5 (EFCAB5).